The following is a 54-amino-acid chain: Protein PIGBOS1 (54 aa).

The Mitochondrial intermembrane portion of the chain corresponds to 1–4 (MFRR). Residues 5–25 (LTFAQLLFATVLGIAGGVYIF) traverse the membrane as a helical segment. Topologically, residues 26-54 (QPVFEQYAKDQKELKEKMQLVQESEEKKS) are cytoplasmic. The tract at residues 30 to 36 (EQYAKDQ) is required for interaction with CLCC1.

As to quaternary structure, homooligomer. Interacts (via C-terminus) with endoplasmic reticulum (ER) protein CLCC1; the interaction occurs at the mitochondria-associated ER membrane, a zone of contact between the ER and mitochondrial membranes, but does not appear to play a role in ER-mitochondria tethering and is not affected by ER stress.

It is found in the mitochondrion outer membrane. Functionally, plays a role in regulation of the unfolded protein response triggered by endoplasmic reticulum (ER) stress resulting from the presence of unfolded proteins in the ER lumen. This chain is Protein PIGBOS1, found in Homo sapiens (Human).